Here is a 67-residue protein sequence, read N- to C-terminus: Large ribosomal subunit protein bL35 (67 aa).

It belongs to the bacterial ribosomal protein bL35 family.

The polypeptide is Large ribosomal subunit protein bL35 (Leptospira interrogans serogroup Icterohaemorrhagiae serovar Lai (strain 56601)).